The chain runs to 233 residues: Ribosome maturation protein SDO1 homolog (233 aa).

This sequence belongs to the SDO1/SBDS family.

The sequence is that of Ribosome maturation protein SDO1 homolog from Aeropyrum pernix (strain ATCC 700893 / DSM 11879 / JCM 9820 / NBRC 100138 / K1).